Reading from the N-terminus, the 360-residue chain is MADSESKIYHERQRLQFCLLHCLNNLFQDKDAFTKESLNSIAEKLETNDPNKETWTPLSFVLKPHHNTITGNYDVNVMITALEGKGKSVVWHDKRIGASSIDLDDADTLMGIVLNVPVKRYGGLWRSRHWVVVRKINGVWYNLDSDLVVPQLFRDDDEVRGFLDQNLSLDVIGLIWNLPYNANQLPLASNYRVVITHWSDLNGMFSHVTNYPLDFDVYPQVSSKVSAIYKATGTKRFNANTRPVTPGKQSSVKGPYYKNPGCTTSCGLRLPRKTECTAARLIKDLSCKFVMGLRLVVMRKKKKKRSPPLKKASSSGISQPSVISVVNDNNHRSAAIEDCIQFINSSSSFTRSNSTCGSKS.

Residues 5 to 192 (ESKIYHERQR…NQLPLASNYR (188 aa)) form the Josephin domain. The active-site Nucleophile is Cys-18. Residue His-129 is the Proton acceptor of the active site.

It catalyses the reaction Thiol-dependent hydrolysis of ester, thioester, amide, peptide and isopeptide bonds formed by the C-terminal Gly of ubiquitin (a 76-residue protein attached to proteins as an intracellular targeting signal).. In terms of biological role, may act as a deubiquitinating enzyme. This chain is Josephin-like protein, found in Arabidopsis thaliana (Mouse-ear cress).